The sequence spans 726 residues: Probable dipeptidyl-peptidase 5 (726 aa).

Residues 1-19 form the signal peptide; sequence MAAAKWLIASLAFASSGLA. N-linked (GlcNAc...) asparagine glycosylation is found at asparagine 96 and asparagine 252. A disordered region spans residues 269–291; sequence AEPINKRNGPRTPQGIEGASSSP. Serine 558 serves as the catalytic Charge relay system. Residue asparagine 605 is glycosylated (N-linked (GlcNAc...) asparagine). Active-site charge relay system residues include aspartate 641 and histidine 673. Asparagine 699 carries N-linked (GlcNAc...) asparagine glycosylation.

Belongs to the peptidase S9C family.

The protein resides in the secreted. Its function is as follows. Extracellular dipeptidyl-peptidase which removes N-terminal dipeptides sequentially from polypeptides having unsubstituted N-termini. Contributes to pathogenicity. The chain is Probable dipeptidyl-peptidase 5 (DPP5) from Trichophyton verrucosum (strain HKI 0517).